The sequence spans 631 residues: 1-deoxy-D-xylulose-5-phosphate synthase (631 aa).

Residues H73 and 114 to 116 (GHS) each bind thiamine diphosphate. Residue D145 participates in Mg(2+) binding. Residues 146–147 (GA), N174, Y285, and E366 each bind thiamine diphosphate. N174 contributes to the Mg(2+) binding site.

It belongs to the transketolase family. DXPS subfamily. In terms of assembly, homodimer. Requires Mg(2+) as cofactor. The cofactor is thiamine diphosphate.

The enzyme catalyses D-glyceraldehyde 3-phosphate + pyruvate + H(+) = 1-deoxy-D-xylulose 5-phosphate + CO2. Its pathway is metabolic intermediate biosynthesis; 1-deoxy-D-xylulose 5-phosphate biosynthesis; 1-deoxy-D-xylulose 5-phosphate from D-glyceraldehyde 3-phosphate and pyruvate: step 1/1. Functionally, catalyzes the acyloin condensation reaction between C atoms 2 and 3 of pyruvate and glyceraldehyde 3-phosphate to yield 1-deoxy-D-xylulose-5-phosphate (DXP). The sequence is that of 1-deoxy-D-xylulose-5-phosphate synthase from Desulfitobacterium hafniense (strain DSM 10664 / DCB-2).